Reading from the N-terminus, the 428-residue chain is Tryptophan synthase beta chain (428 aa).

An N6-(pyridoxal phosphate)lysine modification is found at Lys-92.

It belongs to the TrpB family. In terms of assembly, tetramer of two alpha and two beta chains. It depends on pyridoxal 5'-phosphate as a cofactor.

It catalyses the reaction (1S,2R)-1-C-(indol-3-yl)glycerol 3-phosphate + L-serine = D-glyceraldehyde 3-phosphate + L-tryptophan + H2O. It functions in the pathway amino-acid biosynthesis; L-tryptophan biosynthesis; L-tryptophan from chorismate: step 5/5. Functionally, the beta subunit is responsible for the synthesis of L-tryptophan from indole and L-serine. This chain is Tryptophan synthase beta chain, found in Leptothrix cholodnii (strain ATCC 51168 / LMG 8142 / SP-6) (Leptothrix discophora (strain SP-6)).